The sequence spans 258 residues: Ribonuclease HII (258 aa).

Residues 71-258 form the RNase H type-2 domain; sequence ELIAGIDEVG…PIKSMVNFKY (188 aa). A divalent metal cation-binding residues include aspartate 77, glutamate 78, and aspartate 169.

It belongs to the RNase HII family. Mn(2+) is required as a cofactor. It depends on Mg(2+) as a cofactor.

The protein localises to the cytoplasm. It carries out the reaction Endonucleolytic cleavage to 5'-phosphomonoester.. Functionally, endonuclease that specifically degrades the RNA of RNA-DNA hybrids. This chain is Ribonuclease HII, found in Lactococcus lactis subsp. cremoris (strain SK11).